A 540-amino-acid polypeptide reads, in one-letter code: Flavin-dependent halogenase ptaM (540 aa).

Residues 1-21 form the signal peptide; the sequence is MSVPAQTSVLIVGGGPAGSYA. Residues G14, A17, and E47 each contribute to the FAD site. Residues N159, N192, N204, and N243 are each glycosylated (N-linked (GlcNAc...) asparagine). Chloride contacts are provided by S330 and G331. N-linked (GlcNAc...) asparagine glycosylation is found at N480, N491, and N523.

It belongs to the flavin-dependent halogenase family.

Its pathway is secondary metabolite biosynthesis. Its function is as follows. Flavin-dependent halogenase; part of the gene cluster that mediates the biosynthesis of pestheic acid, a diphenyl ether which is a biosynthetic precursor of the unique chloropupukeananes. The biosynthesis initiates from condensation of acetate and malonate units catalyzed by the non-reducing PKS ptaA. As the ptaA protein is TE/CLC domain-deficient, hydrolysis and Claisen cyclization of the polyketide could be catalyzed by ptaB containing a beta-lactamase domain. The ptaB protein might hydrolyze the thioester bond between the ACP of ptaA and the intermediate to release atrochrysone carboxylic acid, which is spontaneously dehydrated to form endocrocin anthrone. Endocrocin anthrone is then converted to endocrocin, catalyzed by the anthrone oxygenase ptaC. Spontaneous decarboxylation of endocrocin occurs to generate emodin. An O-methyltransferase (ptaH or ptaI) could methylate emodin to form physcion. PtaJ could then catalyze the oxidative cleavage of physcion, and rotation of the intermediate could then afford desmethylisosulochrin. PtaF, a putative NADH-dependent oxidoreductase, might also participate in the oxidative cleavage step. Desmethylisosulochrin is then transformed by another O-methyltransferase (ptaH or ptaI) to form isosulochrin. Chlorination of isosulochrin by ptaM in the cyclohexadienone B ring then produces chloroisosulochrin. PtaE is responsible for the oxidative coupling reactions of both benzophenones isosulochrin and chloroisosulochrin to RES-1214-1 and pestheic acid respectively, regardless of chlorination. In Pestalotiopsis fici (strain W106-1 / CGMCC3.15140), this protein is Flavin-dependent halogenase ptaM.